The sequence spans 293 residues: MPWIQLRINTNSDDAETISDLLMEEGSVSITFEDGKDTPIFEPKLGETPLWRDTVVVALFDAETDLTPTIAMLKTLPFLGENFSHKVEQIEDKDWVREWMDNFHPIQFGTRLWICPSWREIPDPTAVNVILDPGLAFGTGTHPTTALCLEWLDSLDLSDEEVIDFGCGSGILAVAALKLGAKNVTGIDIDYQAIDASRANAERNDVADKLALYLPEDQPADLKADVLVANILAGPLRELAPLIAERVKTGGKLALSGLLKEQAQEISDFYSQWFDMDAAAHKEDWSRLTGKRK.

The S-adenosyl-L-methionine site is built by T145, G166, D188, and N230.

This sequence belongs to the methyltransferase superfamily. PrmA family.

Its subcellular location is the cytoplasm. The catalysed reaction is L-lysyl-[protein] + 3 S-adenosyl-L-methionine = N(6),N(6),N(6)-trimethyl-L-lysyl-[protein] + 3 S-adenosyl-L-homocysteine + 3 H(+). Methylates ribosomal protein L11. This chain is Ribosomal protein L11 methyltransferase, found in Shewanella baltica (strain OS223).